Reading from the N-terminus, the 57-residue chain is Large ribosomal subunit protein bL32 (57 aa).

Over residues 1-19 (MAVPKRRMSRANTRSRRAQ) the composition is skewed to basic residues. The interval 1–20 (MAVPKRRMSRANTRSRRAQW) is disordered.

Belongs to the bacterial ribosomal protein bL32 family.

This Mycobacterium avium (strain 104) protein is Large ribosomal subunit protein bL32.